Reading from the N-terminus, the 165-residue chain is Endoribonuclease YbeY (165 aa).

H119, H123, and H129 together coordinate Zn(2+).

This sequence belongs to the endoribonuclease YbeY family. The cofactor is Zn(2+).

Its subcellular location is the cytoplasm. In terms of biological role, single strand-specific metallo-endoribonuclease involved in late-stage 70S ribosome quality control and in maturation of the 3' terminus of the 16S rRNA. This chain is Endoribonuclease YbeY, found in Streptomyces coelicolor (strain ATCC BAA-471 / A3(2) / M145).